Reading from the N-terminus, the 193-residue chain is dCTP deaminase (193 aa).

DCTP-binding positions include 110–115 (RSSLAR), D128, 136–138 (VLE), Y171, K178, and Q182. E138 functions as the Proton donor/acceptor in the catalytic mechanism.

It belongs to the dCTP deaminase family. Homotrimer.

The enzyme catalyses dCTP + H2O + H(+) = dUTP + NH4(+). Its pathway is pyrimidine metabolism; dUMP biosynthesis; dUMP from dCTP (dUTP route): step 1/2. Catalyzes the deamination of dCTP to dUTP. The polypeptide is dCTP deaminase (Escherichia coli (strain K12 / MC4100 / BW2952)).